The sequence spans 236 residues: Ribose-5-phosphate isomerase A (236 aa).

Residues Thr28 to Thr31, Asp83 to Asp86, and Lys96 to Gly99 contribute to the substrate site. Glu105 serves as the catalytic Proton acceptor. Substrate is bound at residue Lys123.

It belongs to the ribose 5-phosphate isomerase family. In terms of assembly, homodimer.

The enzyme catalyses aldehydo-D-ribose 5-phosphate = D-ribulose 5-phosphate. It participates in carbohydrate degradation; pentose phosphate pathway; D-ribose 5-phosphate from D-ribulose 5-phosphate (non-oxidative stage): step 1/1. In terms of biological role, catalyzes the reversible conversion of ribose-5-phosphate to ribulose 5-phosphate. This chain is Ribose-5-phosphate isomerase A, found in Methylorubrum extorquens (strain CM4 / NCIMB 13688) (Methylobacterium extorquens).